The chain runs to 278 residues: HTH-type transcriptional regulator HdfR (278 aa).

Positions 1 to 58 (MDTELLKTFLEVSRTRHFGRAAEALYLTQSAVSFRIRQLENQLGVNLFTRHRNNIRLT) constitute an HTH lysR-type domain. The segment at residues 18-37 (FGRAAEALYLTQSAVSFRIR) is a DNA-binding region (H-T-H motif).

Belongs to the LysR transcriptional regulatory family.

Negatively regulates the transcription of the flagellar master operon flhDC by binding to the upstream region of the operon. The sequence is that of HTH-type transcriptional regulator HdfR from Salmonella agona (strain SL483).